The following is a 268-amino-acid chain: Diaminopimelate epimerase (268 aa).

3 residues coordinate substrate: asparagine 13, glutamine 46, and asparagine 64. Cysteine 73 serves as the catalytic Proton donor. Residues 74–75 (GN), asparagine 148, asparagine 181, and 199–200 (ER) contribute to the substrate site. The Proton acceptor role is filled by cysteine 208. A substrate-binding site is contributed by 209-210 (GT).

It belongs to the diaminopimelate epimerase family. Homodimer.

It is found in the cytoplasm. The catalysed reaction is (2S,6S)-2,6-diaminopimelate = meso-2,6-diaminopimelate. It functions in the pathway amino-acid biosynthesis; L-lysine biosynthesis via DAP pathway; DL-2,6-diaminopimelate from LL-2,6-diaminopimelate: step 1/1. Functionally, catalyzes the stereoinversion of LL-2,6-diaminopimelate (L,L-DAP) to meso-diaminopimelate (meso-DAP), a precursor of L-lysine and an essential component of the bacterial peptidoglycan. The sequence is that of Diaminopimelate epimerase from Sphingopyxis alaskensis (strain DSM 13593 / LMG 18877 / RB2256) (Sphingomonas alaskensis).